The chain runs to 206 residues: Large ribosomal subunit protein uL4 (206 aa).

Positions 44-80 are disordered; sequence KRAGTHSVKTRSTISGGGAKPWRQKGTGRARSGSNRS.

The protein belongs to the universal ribosomal protein uL4 family. Part of the 50S ribosomal subunit.

In terms of biological role, one of the primary rRNA binding proteins, this protein initially binds near the 5'-end of the 23S rRNA. It is important during the early stages of 50S assembly. It makes multiple contacts with different domains of the 23S rRNA in the assembled 50S subunit and ribosome. Forms part of the polypeptide exit tunnel. The polypeptide is Large ribosomal subunit protein uL4 (Oleidesulfovibrio alaskensis (strain ATCC BAA-1058 / DSM 17464 / G20) (Desulfovibrio alaskensis)).